The chain runs to 162 residues: Endoribonuclease YbeY (162 aa).

Zn(2+) is bound by residues histidine 117, histidine 121, and histidine 127.

The protein belongs to the endoribonuclease YbeY family. It depends on Zn(2+) as a cofactor.

Its subcellular location is the cytoplasm. Functionally, single strand-specific metallo-endoribonuclease involved in late-stage 70S ribosome quality control and in maturation of the 3' terminus of the 16S rRNA. This is Endoribonuclease YbeY from Francisella tularensis subsp. mediasiatica (strain FSC147).